The primary structure comprises 275 residues: Membrane protein insertase YidC 1 (275 aa).

The signal sequence occupies residues 1–25; that stretch reads MRKVLRVKKNIKIARIVPLVLLLVA. C26 is lipidated: N-palmitoyl cysteine. Residue C26 is the site of S-diacylglycerol cysteine attachment. 5 helical membrane passes run 58-78, 129-149, 171-191, 198-216, and 222-240; these read SIGVGIILFTLTIRLMLMPLF, YASLLPLLIQMPVMIALFQAL, LYLLPVLAAVFTFLSTWLTNL, VMMTVMIYVMPLMIFFMGF, and VVLYWTVSNAFQVVQLLLL.

This sequence belongs to the OXA1/ALB3/YidC family. Type 2 subfamily.

The protein localises to the cell membrane. In terms of biological role, required for the insertion and/or proper folding and/or complex formation of integral membrane proteins into the membrane. Involved in integration of membrane proteins that insert both dependently and independently of the Sec translocase complex, as well as at least some lipoproteins. This Streptococcus pyogenes serotype M1 protein is Membrane protein insertase YidC 1.